We begin with the raw amino-acid sequence, 110 residues long: Integration host factor subunit alpha (110 aa).

It belongs to the bacterial histone-like protein family. Heterodimer of an alpha and a beta chain.

Functionally, this protein is one of the two subunits of integration host factor, a specific DNA-binding protein that functions in genetic recombination as well as in transcriptional and translational control. This Nitrobacter hamburgensis (strain DSM 10229 / NCIMB 13809 / X14) protein is Integration host factor subunit alpha.